A 228-amino-acid polypeptide reads, in one-letter code: 7-cyano-7-deazaguanine synthase (228 aa).

7-17 (LSGGLDSAVNL) contributes to the ATP binding site. Positions 192, 200, 203, and 206 each coordinate Zn(2+).

This sequence belongs to the QueC family. In terms of assembly, homodimer. It depends on Zn(2+) as a cofactor.

The catalysed reaction is 7-carboxy-7-deazaguanine + NH4(+) + ATP = 7-cyano-7-deazaguanine + ADP + phosphate + H2O + H(+). It participates in purine metabolism; 7-cyano-7-deazaguanine biosynthesis. Functionally, catalyzes the ATP-dependent conversion of 7-carboxy-7-deazaguanine (CDG) to 7-cyano-7-deazaguanine (preQ(0)). The protein is 7-cyano-7-deazaguanine synthase of Desulforamulus reducens (strain ATCC BAA-1160 / DSM 100696 / MI-1) (Desulfotomaculum reducens).